We begin with the raw amino-acid sequence, 534 residues long: Pentatricopeptide repeat-containing protein At1g07590, mitochondrial (534 aa).

The transit peptide at 1 to 20 (MRSIIALMRQREYFVQAIRR) directs the protein to the mitochondrion. 9 PPR repeats span residues 165–199 (NELL…GYRT), 200–234 (SHLV…KATP), 235–269 (HVST…GVEP), 270–300 (NEVS…IEKS), 305–335 (NWST…IRGF), 339–369 (RSKS…MKNV), 374–408 (ETEQ…GFKP), 409–443 (NSIT…KTSK), and 451–485 (WLET…KYNR).

This sequence belongs to the PPR family. P subfamily.

It is found in the mitochondrion. The chain is Pentatricopeptide repeat-containing protein At1g07590, mitochondrial from Arabidopsis thaliana (Mouse-ear cress).